A 451-amino-acid chain; its full sequence is Tubulin alpha chain (451 aa).

Positions 1–4 (MREC) match the MREC motif motif. A GTP-binding site is contributed by Gln11. At Lys40 the chain carries N6-acetyllysine. Glu71, Ser140, Gly144, Thr145, Thr179, Asn206, and Asn228 together coordinate GTP. Mg(2+) is bound at residue Glu71. The active site involves Glu254. The segment at 432 to 451 (YEEVGVDSVEGEGEEEGEEY) is disordered. Glu445 is modified (5-glutamyl polyglutamate).

It belongs to the tubulin family. In terms of assembly, dimer of alpha and beta chains. A typical microtubule is a hollow water-filled tube with an outer diameter of 25 nm and an inner diameter of 15 nM. Alpha-beta heterodimers associate head-to-tail to form protofilaments running lengthwise along the microtubule wall with the beta-tubulin subunit facing the microtubule plus end conferring a structural polarity. Microtubules usually have 13 protofilaments but different protofilament numbers can be found in some organisms and specialized cells. It depends on Mg(2+) as a cofactor. Some glutamate residues at the C-terminus are polyglycylated, resulting in polyglycine chains on the gamma-carboxyl group. Glycylation is mainly limited to tubulin incorporated into axonemes (cilia and flagella) whereas glutamylation is prevalent in neuronal cells, centrioles, axonemes, and the mitotic spindle. Both modifications can coexist on the same protein on adjacent residues, and lowering polyglycylation levels increases polyglutamylation, and reciprocally. The precise function of polyglycylation is still unclear. Post-translationally, some glutamate residues at the C-terminus are polyglutamylated, resulting in polyglutamate chains on the gamma-carboxyl group. Polyglutamylation plays a key role in microtubule severing by spastin (SPAST). SPAST preferentially recognizes and acts on microtubules decorated with short polyglutamate tails: severing activity by SPAST increases as the number of glutamates per tubulin rises from one to eight, but decreases beyond this glutamylation threshold. In terms of processing, acetylation of alpha chains at Lys-40 is located inside the microtubule lumen. This modification has been correlated with increased microtubule stability, intracellular transport and ciliary assembly. Undergoes a tyrosination/detyrosination cycle, the cyclic removal and re-addition of a C-terminal tyrosine residue by the enzymes tubulin tyrosine carboxypeptidase (MATCAP, VASH1 or VASH2) and tubulin tyrosine ligase (TTL), respectively. Post-translationally, tyrosination promotes microtubule interaction with CAP-Gly microtubule plus-end tracking proteins. Tyrosinated tubulins regulate the initiation of dynein-driven motility. In terms of processing, detyrosination is involved in metaphase plate congression by guiding chromosomes during mitosis. Detyrosination increases microtubules-dependent mechanotransduction in dystrophic cardiac and skeletal muscle. In cardiomyocytes, detyrosinated microtubules are required to resist to contractile compression during contraction.

It localises to the cytoplasm. The protein resides in the cytoskeleton. It catalyses the reaction GTP + H2O = GDP + phosphate + H(+). In terms of biological role, tubulin is the major constituent of microtubules, a cylinder consisting of laterally associated linear protofilaments composed of alpha- and beta-tubulin heterodimers. Microtubules grow by the addition of GTP-tubulin dimers to the microtubule end, where a stabilizing cap forms. Below the cap, tubulin dimers are in GDP-bound state, owing to GTPase activity of alpha-tubulin. The sequence is that of Tubulin alpha chain from Torpedo marmorata (Marbled electric ray).